Reading from the N-terminus, the 192-residue chain is MGTQTNKGFFYDEFLKVLKEQQVDVRLMARDSEKDAAISAHKRILSARSEVFEEMFESDKYKASSKLETITLSEMKHEVLEAFVDFTYSDGSMLSEKAKQHAMSLYSAAKDYEIPRLWCLCRKELIASLNMSNALRVLQLAQIPYDESLSVAAFTTIKNSKLKLSSSTKVKVFVVNHPNGPLEITRAIFPRN.

One can recognise a BTB domain in the interval 23–96 (VDVRLMARDS…TYSDGSMLSE (74 aa)).

The protein operates within protein modification; protein ubiquitination. Its function is as follows. May act as a substrate-specific adapter of an E3 ubiquitin-protein ligase complex (CUL3-RBX1-BTB) which mediates the ubiquitination and subsequent proteasomal degradation of target proteins. The polypeptide is Putative BTB/POZ domain-containing protein At4g04090 (Arabidopsis thaliana (Mouse-ear cress)).